Consider the following 507-residue polypeptide: Protein disulfide-isomerase (507 aa).

An N-terminal signal peptide occupies residues Met1 to Ser20. In terms of domain architecture, Thioredoxin 1 spans Phe21 to Gly144. Catalysis depends on nucleophile residues Cys62 and Cys65. Cysteines 62 and 65 form a disulfide. Asn181 and Asn278 each carry an N-linked (GlcNAc...) asparagine glycan. In terms of domain architecture, Thioredoxin 2 spans Tyr365 to Glu485. Catalysis depends on nucleophile residues Cys407 and Cys410. Cys407 and Cys410 are disulfide-bonded. The interval Arg484–Leu507 is disordered. A Prevents secretion from ER motif is present at residues Lys504–Leu507.

The protein belongs to the protein disulfide isomerase family.

It is found in the endoplasmic reticulum lumen. The enzyme catalyses Catalyzes the rearrangement of -S-S- bonds in proteins.. Functionally, participates in the folding of proteins containing disulfide bonds, may be involved in glycosylation, prolyl hydroxylation and triglyceride transfer. This chain is Protein disulfide-isomerase (PDI), found in Datisca glomerata (Durango root).